The primary structure comprises 425 residues: 5-methylthioadenosine/S-adenosylhomocysteine deaminase (425 aa).

2 residues coordinate Zn(2+): His63 and His65. Substrate-binding residues include Glu92 and His184. His211 lines the Zn(2+) pocket. Substrate is bound by residues Glu214 and Asp299. Zn(2+) is bound at residue Asp299.

The protein belongs to the metallo-dependent hydrolases superfamily. MTA/SAH deaminase family. The cofactor is Zn(2+).

It catalyses the reaction S-adenosyl-L-homocysteine + H2O + H(+) = S-inosyl-L-homocysteine + NH4(+). The enzyme catalyses S-methyl-5'-thioadenosine + H2O + H(+) = S-methyl-5'-thioinosine + NH4(+). Catalyzes the deamination of 5-methylthioadenosine and S-adenosyl-L-homocysteine into 5-methylthioinosine and S-inosyl-L-homocysteine, respectively. Is also able to deaminate adenosine. The polypeptide is 5-methylthioadenosine/S-adenosylhomocysteine deaminase (Pyrococcus abyssi (strain GE5 / Orsay)).